Reading from the N-terminus, the 338-residue chain is Hydroxyproline O-galactosyltransferase HPGT1 (338 aa).

The Cytoplasmic portion of the chain corresponds to 1-12 (MARKGSSIRLSS). The chain crosses the membrane as a helical; Signal-anchor for type II membrane protein span at residues 13–32 (SRISTLLLFMFATFASFYVA). Topologically, residues 33–338 (GRLWQESQTR…WSSEAICAGV (306 aa)) are lumenal.

This sequence belongs to the glycosyltransferase 31 family. It depends on Mn(2+) as a cofactor. In terms of tissue distribution, expressed in roots, rosette leaves, cauline leaves, stems, flowers and siliques.

It localises to the golgi apparatus membrane. It participates in protein modification; protein glycosylation. In terms of biological role, possesses hydroxyproline O-galactosyltransferase activity. Transfers galactose from UDP-galactose to hydroxyproline residues in the arabinogalactan proteins (AGPs). Is specific for AGPs containing non-contiguous peptidyl hydroxyproline residues. The addition of galactose onto the peptidyl hydroxyproline residues in AGP core proteins represents the first committed step in arabinogalactan polysaccharide addition. AGP glycans play essential roles in both vegetative and reproductive plant growth. This chain is Hydroxyproline O-galactosyltransferase HPGT1, found in Arabidopsis thaliana (Mouse-ear cress).